The chain runs to 382 residues: tRNA-specific 2-thiouridylase MnmA (382 aa).

ATP is bound by residues 18-25 (AMSGGVDS) and Leu-44. The active-site Nucleophile is Cys-112. Residues Cys-112 and Cys-209 are joined by a disulfide bond. Gly-136 contributes to the ATP binding site. Residues 159–161 (RDQ) form an interaction with tRNA region. Catalysis depends on Cys-209, which acts as the Cysteine persulfide intermediate.

It belongs to the MnmA/TRMU family.

It localises to the cytoplasm. It catalyses the reaction S-sulfanyl-L-cysteinyl-[protein] + uridine(34) in tRNA + AH2 + ATP = 2-thiouridine(34) in tRNA + L-cysteinyl-[protein] + A + AMP + diphosphate + H(+). Its function is as follows. Catalyzes the 2-thiolation of uridine at the wobble position (U34) of tRNA, leading to the formation of s(2)U34. This is tRNA-specific 2-thiouridylase MnmA from Methylobacterium sp. (strain 4-46).